The primary structure comprises 498 residues: Sugar transport protein 2 (498 aa).

The Cytoplasmic segment spans residues 1-22; the sequence is MAVGSMNVEEGTKAFPAKLTGQ. The next 12 membrane-spanning stretches (helical) occupy residues 23-43, 80-100, 117-137, 140-160, 167-187, 200-220, 288-308, 320-340, 348-368, 381-401, 421-441, and 450-470; these read VFLCCVIAAVGGLMFGYDIGI, LLQLFTSSLYLAGIFASFISS, IFFLVGAILNLSAQELGMLIG, ILLGFGIGFGNQTVPLFISEI, GGLNVMFQFLITIGILAASYV, YSLGGAAVPALILLIGSFFIH, LQFFQQFTGINVVMFYAPVLF, ISTVVTNGVNAIATVISLLVV, LLMEGALQMTATQMTIGGILL, AVPLIVLILICVYVSGFAWSW, GYFCAVAMNMVCTFIIGQFFL, and LLFFFFGIMNIIMGLFVVFFL. Over 471 to 498 the chain is Cytoplasmic; it reads PETKGVPIEEMAEKRWKTHPRWKKYFKD.

This sequence belongs to the major facilitator superfamily. Sugar transporter (TC 2.A.1.1) family. Pollen specific (at protein level).

The protein localises to the membrane. Functionally, mediates an active uptake of hexoses, probably by sugar/hydrogen symport. Can transport glucose, 3-O-methylglucose, xylose, mannose, fructose and galactose. The protein is Sugar transport protein 2 (STP2) of Arabidopsis thaliana (Mouse-ear cress).